The primary structure comprises 211 residues: ATP phosphoribosyltransferase (211 aa).

It belongs to the ATP phosphoribosyltransferase family. Short subfamily. In terms of assembly, heteromultimer composed of HisG and HisZ subunits.

The protein resides in the cytoplasm. The catalysed reaction is 1-(5-phospho-beta-D-ribosyl)-ATP + diphosphate = 5-phospho-alpha-D-ribose 1-diphosphate + ATP. The protein operates within amino-acid biosynthesis; L-histidine biosynthesis; L-histidine from 5-phospho-alpha-D-ribose 1-diphosphate: step 1/9. In terms of biological role, catalyzes the condensation of ATP and 5-phosphoribose 1-diphosphate to form N'-(5'-phosphoribosyl)-ATP (PR-ATP). Has a crucial role in the pathway because the rate of histidine biosynthesis seems to be controlled primarily by regulation of HisG enzymatic activity. The sequence is that of ATP phosphoribosyltransferase from Lacticaseibacillus paracasei (strain ATCC 334 / BCRC 17002 / CCUG 31169 / CIP 107868 / KCTC 3260 / NRRL B-441) (Lactobacillus paracasei).